The primary structure comprises 462 residues: Argininosuccinate lyase (462 aa).

It belongs to the lyase 1 family. Argininosuccinate lyase subfamily.

Its subcellular location is the cytoplasm. The enzyme catalyses 2-(N(omega)-L-arginino)succinate = fumarate + L-arginine. It participates in amino-acid biosynthesis; L-arginine biosynthesis; L-arginine from L-ornithine and carbamoyl phosphate: step 3/3. The protein is Argininosuccinate lyase of Streptococcus agalactiae serotype III (strain NEM316).